Here is a 119-residue protein sequence, read N- to C-terminus: MVKMTKSKTFQAYLPNCHRTYSCIHCRAHLANHDELISKSFQGSQGRAYLFNSVVNVGCGPAEERVLLTGLHAVADIYCENCKTTLGWKYEHAFESSQKYKEGKFIIELAHMIKDNGWE.

The Yippee domain maps to 19-116; sequence RTYSCIHCRA…IELAHMIKDN (98 aa). Zn(2+) is bound by residues Cys-23, Cys-26, Cys-79, and Cys-82. The short motif at 99–104 is the Nuclear localization signal element; sequence KYKEGK.

This sequence belongs to the yippee family.

It localises to the nucleus. Functionally, may play a role in epithelioid conversion of fibroblasts. In Chlorocebus aethiops (Green monkey), this protein is Protein yippee-like 1 (YPEL1).